Reading from the N-terminus, the 793-residue chain is DnaJ homolog subfamily C member 10 (793 aa).

The first 32 residues, 1–32, serve as a signal peptide directing secretion; sequence MGVWLNKDDFIRDLKRISLCLLILYVVVVVGT. Positions 35 to 100 constitute a J domain; sequence NFYSLLGVSK…DLRKKYDKYG (66 aa). One can recognise a Thioredoxin 1 domain in the interval 130 to 232; sequence EIITLERREF…ESLVAFAMQH (103 aa). Cysteine 158 and cysteine 161 are joined by a disulfide. Trxb regions lie at residues 235–350 and 348–463; these read STVT…LPDF and PDFE…PQNF. 3 Thioredoxin domains span residues 454–553, 557–665, and 671–776; these read HVTT…IEDL, SVVS…SWGL, and ASID…ALIY. Cysteine 480 and cysteine 483 form a disulfide bridge. Asparagine 530 carries N-linked (GlcNAc...) asparagine glycosylation. Disulfide bonds link cysteine 588–cysteine 591 and cysteine 700–cysteine 703. A Prevents secretion from ER motif is present at residues 790–793; that stretch reads KDEL.

Interacts with HSPA5 (via its J domain). Interacts with EDEM1. In terms of tissue distribution, ubiquitous. Particularly abundant in secretory tissues. Ubiquitous in fetal tissues and tumor tissues. Higher expression in fetal tissues than in adult tissues. Expressed in testis, pancreas, fetal thymus and fetal kidney. High expression in heart, liver, kidney, and testis. Low expression in spleen and skeletal muscle.

The protein resides in the endoplasmic reticulum lumen. In terms of biological role, endoplasmic reticulum disulfide reductase involved both in the correct folding of proteins and degradation of misfolded proteins. Required for efficient folding of proteins in the endoplasmic reticulum by catalyzing the removal of non-native disulfide bonds formed during the folding of proteins, such as LDLR. Also involved in endoplasmic reticulum-associated degradation (ERAD) by reducing incorrect disulfide bonds in misfolded glycoproteins recognized by EDEM1. Interaction with HSPA5 is required its activity, not for the disulfide reductase activity, but to facilitate the release of DNAJC10 from its substrate. Promotes apoptotic signaling pathway in response to endoplasmic reticulum stress. The chain is DnaJ homolog subfamily C member 10 (Dnajc10) from Mus musculus (Mouse).